Reading from the N-terminus, the 281-residue chain is NADPH-dependent 7-cyano-7-deazaguanine reductase (281 aa).

88–90 serves as a coordination point for substrate; that stretch reads IES. 90–91 contacts NADPH; sequence SK. Residue C189 is the Thioimide intermediate of the active site. The active-site Proton donor is the D196. Residue 228 to 229 participates in substrate binding; the sequence is HE. 257–258 contributes to the NADPH binding site; sequence RG.

This sequence belongs to the GTP cyclohydrolase I family. QueF type 2 subfamily. As to quaternary structure, homodimer.

Its subcellular location is the cytoplasm. It catalyses the reaction 7-aminomethyl-7-carbaguanine + 2 NADP(+) = 7-cyano-7-deazaguanine + 2 NADPH + 3 H(+). The protein operates within tRNA modification; tRNA-queuosine biosynthesis. Functionally, catalyzes the NADPH-dependent reduction of 7-cyano-7-deazaguanine (preQ0) to 7-aminomethyl-7-deazaguanine (preQ1). In Erwinia tasmaniensis (strain DSM 17950 / CFBP 7177 / CIP 109463 / NCPPB 4357 / Et1/99), this protein is NADPH-dependent 7-cyano-7-deazaguanine reductase.